Here is a 202-residue protein sequence, read N- to C-terminus: Na(+)-translocating NADH-quinone reductase subunit E (202 aa).

6 consecutive transmembrane segments (helical) span residues 11–31 (SIFM…FLAV), 41–61 (LGVA…IIYF), 81–101 (FLGF…LEMV), 114–134 (GIYL…LFMV), 144–164 (LVYG…LAGI), and 180–200 (LGIT…FSGI).

This sequence belongs to the NqrDE/RnfAE family. Composed of six subunits; NqrA, NqrB, NqrC, NqrD, NqrE and NqrF.

It localises to the cell inner membrane. It carries out the reaction a ubiquinone + n Na(+)(in) + NADH + H(+) = a ubiquinol + n Na(+)(out) + NAD(+). Its function is as follows. NQR complex catalyzes the reduction of ubiquinone-1 to ubiquinol by two successive reactions, coupled with the transport of Na(+) ions from the cytoplasm to the periplasm. NqrA to NqrE are probably involved in the second step, the conversion of ubisemiquinone to ubiquinol. The sequence is that of Na(+)-translocating NADH-quinone reductase subunit E from Psychromonas ingrahamii (strain DSM 17664 / CCUG 51855 / 37).